Reading from the N-terminus, the 348-residue chain is DnaJ homolog subfamily B member 5 (348 aa).

A J domain is found at 4 to 68; that stretch reads DYYKILGIPS…KKRGLYDQYG (65 aa).

The chain is DnaJ homolog subfamily B member 5 (DNAJB5) from Bos taurus (Bovine).